Reading from the N-terminus, the 162-residue chain is Podoplanin (162 aa).

An N-terminal signal peptide occupies residues 1-22 (MWKVSALLFVLGSASLWVLAEG). Residues 23-57 (ASTGQPEDDTETTGLEGGVAMPGAEDDVVTPGTSE) form a disordered region. Over 23–131 (ASTGQPEDDT…EKDGLSTVTL (109 aa)) the chain is Extracellular. O-linked (GalNAc...) threonine glycans are attached at residues T25, T32, T34, T35, T52, T55, T65, T66, T76, and T85. Residues 85 to 108 (TSESTVHAQEQSPSATASNVATSH) are compositionally biased toward polar residues. The segment at 85 to 119 (TSESTVHAQEQSPSATASNVATSHSTEKVDGDTQT) is disordered. Residues S86 and S88 are each glycosylated (O-linked (GalNAc...) serine). T89 carries an O-linked (GalNAc...) threonine glycan. 2 O-linked (GalNAc...) serine glycosylation sites follow: S96 and S98. O-linked (GalNAc...) threonine glycosylation is present at T100. A glycan (O-linked (GalNAc...) serine) is linked at S102. An O-linked (GalNAc...) threonine glycan is attached at T106. O-linked (GalNAc...) serine glycosylation is found at S107 and S109. Residues 109–119 (STEKVDGDTQT) are compositionally biased toward basic and acidic residues. T110, T117, T119, and T120 each carry an O-linked (GalNAc...) threonine glycan. Residues 132–152 (VGIIVGVLLAIGFIGAIIVVV) traverse the membrane as a helical segment. The tract at residues 133–137 (GIIVG) is requires for dimerization and lipid rafts association. The Cytoplasmic segment spans residues 153-162 (MRKMSGRYSP). A requires for interaction with MSN and EZR region spans residues 154-155 (RK).

It belongs to the podoplanin family. Homodimer. Interacts with CLEC1B; the interaction is independent of CLEC1B glycosylation and activates CLEC1B; the interaction is dependent of sialic acid on O-glycans. Interacts with CD9; this interaction is homophilic and attenuates platelet aggregation and pulmonary metastasis induced by PDPN. Interacts with LGALS8; the interaction is glycosylation-dependent; may participate in connection of the lymphatic endothelium to the surrounding extracellular matrix. Interacts with HSPA9. Interacts (via extracellular domain) with CD44; this interaction is required for PDPN-mediated directional migration and regulation of lamellipodia extension/stabilization during cell spreading and migration. Interacts (via cytoplasmic domain) with MSN and EZR; activates RHOA and promotes epithelial-mesenchymal transition. Interacts with CCL21; relocalized PDPN to the basolateral membrane. Extensively O-glycosylated. Contains sialic acid residues. O-glycosylation is necessary for platelet aggregation activity. Disialylated at Thr-52; sialic acid is critical for platelet-aggregating activity and for CLEC1B interaction. In terms of processing, the N-terminus is blocked. Post-translationally, cleaved by a metalloprotease within its extracellular (EC) domain, generating a membrane-bound C-terminal fragment (PCTF33) and an extracellular fragment. The resulting membrane-bound C-terminal fragment (PCTF33) is further processed between Val-150 and Val-151 by PSEN1/gamma-secretase generating the intracellular domain of podoplanin (PICD). As to expression, highly expressed in placenta, lung, skeletal muscle and brain. Weakly expressed in brain, kidney and liver. In placenta, expressed on the apical plasma membrane of endothelium. In lung, expressed in alveolar epithelium. Up-regulated in colorectal tumors and expressed in 25% of early oral squamous cell carcinomas.

It localises to the membrane. It is found in the cell projection. Its subcellular location is the lamellipodium membrane. The protein resides in the filopodium membrane. The protein localises to the microvillus membrane. It localises to the ruffle membrane. It is found in the membrane raft. Its subcellular location is the apical cell membrane. The protein resides in the basolateral cell membrane. The protein localises to the invadopodium. It localises to the cytoplasm. It is found in the cytosol. Functionally, mediates effects on cell migration and adhesion through its different partners. During development plays a role in blood and lymphatic vessels separation by binding CLEC1B, triggering CLEC1B activation in platelets and leading to platelet activation and/or aggregation. Interaction with CD9, on the contrary, attenuates platelet aggregation induced by PDPN. Through MSN or EZR interaction promotes epithelial-mesenchymal transition (EMT) leading to ERZ phosphorylation and triggering RHOA activation leading to cell migration increase and invasiveness. Interaction with CD44 promotes directional cell migration in epithelial and tumor cells. In lymph nodes (LNs), controls fibroblastic reticular cells (FRCs) adhesion to the extracellular matrix (ECM) and contraction of the actomyosin by maintaining ERM proteins (EZR; MSN and RDX) and MYL9 activation through association with unknown transmembrane proteins. Engagement of CLEC1B by PDPN promotes FRCs relaxation by blocking lateral membrane interactions leading to reduction of ERM proteins (EZR; MSN and RDX) and MYL9 activation. Through binding with LGALS8 may participate in connection of the lymphatic endothelium to the surrounding extracellular matrix. In keratinocytes, induces changes in cell morphology showing an elongated shape, numerous membrane protrusions, major reorganization of the actin cytoskeleton, increased motility and decreased cell adhesion. Controls invadopodia stability and maturation leading to efficient degradation of the extracellular matrix (ECM) in tumor cells through modulation of RHOC activity in order to activate ROCK1/ROCK2 and LIMK1/LIMK2 and inactivation of CFL1. Required for normal lung cell proliferation and alveolus formation at birth. Does not function as a water channel or as a regulator of aquaporin-type water channels. Does not have any effect on folic acid or amino acid transport. The sequence is that of Podoplanin from Homo sapiens (Human).